The sequence spans 739 residues: Phosphoribosylformylglycinamidine synthase subunit PurL (739 aa).

H52 is a catalytic residue. The ATP site is built by Y55 and K94. Position 96 (E96) interacts with Mg(2+). Substrate-binding positions include S97 to H100 and R119. H98 functions as the Proton acceptor in the catalytic mechanism. D120 provides a ligand contact to Mg(2+). Q243 is a substrate binding site. A Mg(2+)-binding site is contributed by D271. A substrate-binding site is contributed by E315–Q317. 2 residues coordinate ATP: D498 and G535. A Mg(2+)-binding site is contributed by N536. Substrate is bound at residue S538.

The protein belongs to the FGAMS family. Monomer. Part of the FGAM synthase complex composed of 1 PurL, 1 PurQ and 2 PurS subunits.

It is found in the cytoplasm. The enzyme catalyses N(2)-formyl-N(1)-(5-phospho-beta-D-ribosyl)glycinamide + L-glutamine + ATP + H2O = 2-formamido-N(1)-(5-O-phospho-beta-D-ribosyl)acetamidine + L-glutamate + ADP + phosphate + H(+). It participates in purine metabolism; IMP biosynthesis via de novo pathway; 5-amino-1-(5-phospho-D-ribosyl)imidazole from N(2)-formyl-N(1)-(5-phospho-D-ribosyl)glycinamide: step 1/2. Part of the phosphoribosylformylglycinamidine synthase complex involved in the purines biosynthetic pathway. Catalyzes the ATP-dependent conversion of formylglycinamide ribonucleotide (FGAR) and glutamine to yield formylglycinamidine ribonucleotide (FGAM) and glutamate. The FGAM synthase complex is composed of three subunits. PurQ produces an ammonia molecule by converting glutamine to glutamate. PurL transfers the ammonia molecule to FGAR to form FGAM in an ATP-dependent manner. PurS interacts with PurQ and PurL and is thought to assist in the transfer of the ammonia molecule from PurQ to PurL. The polypeptide is Phosphoribosylformylglycinamidine synthase subunit PurL (Caulobacter vibrioides (strain ATCC 19089 / CIP 103742 / CB 15) (Caulobacter crescentus)).